Consider the following 273-residue polypeptide: Putative phosphoenolpyruvate synthase regulatory protein (273 aa).

154-161 (GVSRSGKT) is an ADP binding site.

The protein belongs to the pyruvate, phosphate/water dikinase regulatory protein family. PSRP subfamily.

It carries out the reaction [pyruvate, water dikinase] + ADP = [pyruvate, water dikinase]-phosphate + AMP + H(+). It catalyses the reaction [pyruvate, water dikinase]-phosphate + phosphate + H(+) = [pyruvate, water dikinase] + diphosphate. Its function is as follows. Bifunctional serine/threonine kinase and phosphorylase involved in the regulation of the phosphoenolpyruvate synthase (PEPS) by catalyzing its phosphorylation/dephosphorylation. This chain is Putative phosphoenolpyruvate synthase regulatory protein, found in Neisseria gonorrhoeae (strain ATCC 700825 / FA 1090).